The following is a 196-amino-acid chain: Proteasome subunit beta (196 aa).

A propeptide (removed in mature form; by autocatalysis) is located at residue Met-1. Residue Thr-2 is the Nucleophile of the active site.

Belongs to the peptidase T1B family. As to quaternary structure, the 20S proteasome core is composed of 14 alpha and 14 beta subunits that assemble into four stacked heptameric rings, resulting in a barrel-shaped structure. The two inner rings, each composed of seven catalytic beta subunits, are sandwiched by two outer rings, each composed of seven alpha subunits. The catalytic chamber with the active sites is on the inside of the barrel. Has a gated structure, the ends of the cylinder being occluded by the N-termini of the alpha-subunits. Is capped at one or both ends by the proteasome regulatory ATPase, PAN.

Its subcellular location is the cytoplasm. The catalysed reaction is Cleavage of peptide bonds with very broad specificity.. Its activity is regulated as follows. The formation of the proteasomal ATPase PAN-20S proteasome complex, via the docking of the C-termini of PAN into the intersubunit pockets in the alpha-rings, triggers opening of the gate for substrate entry. Interconversion between the open-gate and close-gate conformations leads to a dynamic regulation of the 20S proteasome proteolysis activity. Component of the proteasome core, a large protease complex with broad specificity involved in protein degradation. This Nanoarchaeum equitans (strain Kin4-M) protein is Proteasome subunit beta.